The chain runs to 145 residues: D-aminoacyl-tRNA deacylase (145 aa).

A Gly-cisPro motif, important for rejection of L-amino acids motif is present at residues 137–138; the sequence is GP.

This sequence belongs to the DTD family. In terms of assembly, homodimer.

The protein localises to the cytoplasm. It catalyses the reaction glycyl-tRNA(Ala) + H2O = tRNA(Ala) + glycine + H(+). It carries out the reaction a D-aminoacyl-tRNA + H2O = a tRNA + a D-alpha-amino acid + H(+). Its function is as follows. An aminoacyl-tRNA editing enzyme that deacylates mischarged D-aminoacyl-tRNAs. Also deacylates mischarged glycyl-tRNA(Ala), protecting cells against glycine mischarging by AlaRS. Acts via tRNA-based rather than protein-based catalysis; rejects L-amino acids rather than detecting D-amino acids in the active site. By recycling D-aminoacyl-tRNA to D-amino acids and free tRNA molecules, this enzyme counteracts the toxicity associated with the formation of D-aminoacyl-tRNA entities in vivo and helps enforce protein L-homochirality. In Pseudomonas aeruginosa (strain UCBPP-PA14), this protein is D-aminoacyl-tRNA deacylase.